Here is a 396-residue protein sequence, read N- to C-terminus: Glycerate kinase (396 aa).

The protein belongs to the glycerate kinase type-2 family.

Its subcellular location is the cytoplasm. It carries out the reaction (R)-glycerate + ATP = (2R)-3-phosphoglycerate + ADP + H(+). The polypeptide is Glycerate kinase (GLYCTK) (Macaca fascicularis (Crab-eating macaque)).